A 322-amino-acid polypeptide reads, in one-letter code: Replication factor C small subunit 2 (322 aa).

44-51 provides a ligand contact to ATP; it reads GPPGTGKT.

It belongs to the activator 1 small subunits family. RfcS subfamily. As to quaternary structure, heteromultimer composed of small subunits (RfcS) and large subunits (RfcL).

Part of the RFC clamp loader complex which loads the PCNA sliding clamp onto DNA. This Pyrobaculum arsenaticum (strain DSM 13514 / JCM 11321 / PZ6) protein is Replication factor C small subunit 2.